We begin with the raw amino-acid sequence, 552 residues long: Cycloheximide resistance protein (552 aa).

Positions 46 to 70 are disordered; it reads VLNSSDKSQSSENKEQTEGDQATIQ. A compositionally biased stretch (polar residues) spans 47 to 56; the sequence is LNSSDKSQSS. A run of 12 helical transmembrane segments spans residues 100 to 120, 137 to 157, 168 to 188, 194 to 213, 225 to 246, 262 to 282, 346 to 362, 381 to 399, 419 to 439, 445 to 464, 477 to 494, and 518 to 539; these read AIAA…SAIY, LATL…LFWS, TPLY…TALS, LSVL…STGG, YSIA…GPLI, WSFW…SFSL, IYIA…FESV, YVST…LPTV, LPPA…FGWT, NWFV…FIIF, VEYL…RSVS, and WGSS…FFYL.

It belongs to the major facilitator superfamily. CAR1 family.

The protein resides in the membrane. In terms of biological role, probable transporter. Confers resistance to cycloheximide. This is Cycloheximide resistance protein (CYHR) from Candida maltosa (Yeast).